A 321-amino-acid chain; its full sequence is Ribose-phosphate pyrophosphokinase (321 aa).

ATP is bound by residues 44 to 46 and 103 to 104; these read DGE and RQ. 2 residues coordinate Mg(2+): His137 and Asp179. Lys202 is an active-site residue. Residues Arg204, Asp228, and 232–236 each bind D-ribose 5-phosphate; that span reads DTAGT.

This sequence belongs to the ribose-phosphate pyrophosphokinase family. Class I subfamily. Homohexamer. Mg(2+) is required as a cofactor.

Its subcellular location is the cytoplasm. It catalyses the reaction D-ribose 5-phosphate + ATP = 5-phospho-alpha-D-ribose 1-diphosphate + AMP + H(+). The protein operates within metabolic intermediate biosynthesis; 5-phospho-alpha-D-ribose 1-diphosphate biosynthesis; 5-phospho-alpha-D-ribose 1-diphosphate from D-ribose 5-phosphate (route I): step 1/1. Involved in the biosynthesis of the central metabolite phospho-alpha-D-ribosyl-1-pyrophosphate (PRPP) via the transfer of pyrophosphoryl group from ATP to 1-hydroxyl of ribose-5-phosphate (Rib-5-P). The sequence is that of Ribose-phosphate pyrophosphokinase from Staphylococcus haemolyticus (strain JCSC1435).